Here is a 314-residue protein sequence, read N- to C-terminus: Inactive chitinase-like protein 1 (314 aa).

The N-terminal stretch at 1–19 (MKEIVRALEGYGPPKDKAA) is a signal peptide. Residues 20–60 (EQCGWQAGGALCPGGLCCSQYGWCANTPEYCGSGCQSQCDG) form the Chitin-binding type-1 domain. Disulfide bonds link Cys-22–Cys-37, Cys-31–Cys-43, Cys-36–Cys-50, Cys-54–Cys-58, Cys-92–Cys-154, Cys-166–Cys-174, and Cys-273–Cys-305.

The protein belongs to the glycosyl hydrolase 19 family. Chitinase class I subfamily.

In terms of biological role, inactive chitinase-like protein that does not exhibit hydrolytic activity toward chitin. Binds strongly to chitin and possesses antifungal activity toward the fungal pathogen Altenaria alternata in plate assays. Inhibits the growth of Fusarium oxysporum on plate assays. Probably involved in defense against fungal pathogens through a mechanism that only involves carbohydrate binding. This is Inactive chitinase-like protein 1 from Hevea brasiliensis (Para rubber tree).